The chain runs to 330 residues: Atypical chemokine receptor 1 (330 aa).

Topologically, residues 1-57 are extracellular; the sequence is MGNCLYPVADDNSTKLAIKEDFLIDFPEDYYPDYNETDVEAAAPCHSCSLLNYSSLP. 3 N-linked (GlcNAc...) asparagine glycosylation sites follow: asparagine 12, asparagine 35, and asparagine 52. 2 disulfide bridges follow: cysteine 45–cysteine 270 and cysteine 123–cysteine 189. The chain crosses the membrane as a helical span at residues 58 to 78; it reads FFILVSILGILASGTILYALL. Residues 79–89 lie on the Cytoplasmic side of the membrane; the sequence is RPLFRWQLYQD. The chain crosses the membrane as a helical span at residues 90 to 110; it reads RSTLVQLAVGSALFSIVVPIL. Residues 111 to 123 lie on the Extracellular side of the membrane; the sequence is ARGLSGALITSLC. A helical membrane pass occupies residues 124–147; sequence HLAHLVAYGSAFAQALLIGYHACL. Residues 148 to 160 are Cytoplasmic-facing; it reads GPQLGAGQVPGLR. The helical transmembrane segment at 161–181 threads the bilayer; that stretch reads LGVTVGLWGVAALLSLPVVLG. Over 182-201 the chain is Extracellular; sequence SDTSQGLCTVTFSGEWETLR. The chain crosses the membrane as a helical span at residues 202 to 222; the sequence is YIHAAACFAIFVLLPLGLLGT. Over 223 to 238 the chain is Cytoplasmic; that stretch reads KGLKTVLGRAPCPWVD. A helical transmembrane segment spans residues 239–259; it reads VLWVWFIFWWPQGMTLGLDSL. Residues 260–281 lie on the Extracellular side of the membrane; sequence VRSKAIVVSTCPAQQALDMLLD. Residues 282 to 302 form a helical membrane-spanning segment; the sequence is VAEALAILHCVATPLLLAWVC. The Cytoplasmic portion of the chain corresponds to 303–330; the sequence is YQATHTSPPSLPLPTTQTSHLDTLGGKS.

Belongs to the G-protein coupled receptor 1 family. Atypical chemokine receptor subfamily.

It is found in the early endosome. The protein resides in the recycling endosome. Its subcellular location is the membrane. In terms of biological role, atypical chemokine receptor that controls chemokine levels and localization via high-affinity chemokine binding that is uncoupled from classic ligand-driven signal transduction cascades, resulting instead in chemokine sequestration, degradation, or transcytosis. Also known as interceptor (internalizing receptor) or chemokine-scavenging receptor or chemokine decoy receptor. Has a promiscuous chemokine-binding profile, interacting with inflammatory chemokines of both the CXC and the CC subfamilies but not with homeostatic chemokines. Acts as a receptor for chemokines including CCL2, CCL5, CCL7, CCL11, CCL13, CCL14, CCL17, CXCL5, CXCL6, IL8/CXCL8, CXCL11, GRO, RANTES, MCP-1 and TARC. May regulate chemokine bioavailability and, consequently, leukocyte recruitment through two distinct mechanisms: when expressed in endothelial cells, it sustains the abluminal to luminal transcytosis of tissue-derived chemokines and their subsequent presentation to circulating leukocytes; when expressed in erythrocytes, serves as blood reservoir of cognate chemokines but also as a chemokine sink, buffering potential surges in plasma chemokine levels. This chain is Atypical chemokine receptor 1 (ACKR1), found in Bos taurus (Bovine).